A 266-amino-acid polypeptide reads, in one-letter code: Small ribosomal subunit protein uS2 (266 aa).

It belongs to the universal ribosomal protein uS2 family.

The protein is Small ribosomal subunit protein uS2 of Bartonella tribocorum (strain CIP 105476 / IBS 506).